Here is a 161-residue protein sequence, read N- to C-terminus: Tick receptor for ospA (161 aa).

As to quaternary structure, interacts with ospA protein from B.burgdorferi. In terms of processing, glycosylated. As to expression, specifically expressed in gut. Localizes predominantly in the intercellular spaces and luminal surface of the gut. In the gut, it localizes along tight junctions. Not expressed in salivary gland or hemolymph.

It is found in the cell membrane. Serves as a receptor for ospA protein of B.burgdorferi, the Lyme disease agent. Required for spirochetal colonization. Essential for pathogen adherence to the vector. The chain is Tick receptor for ospA (TROSPA) from Ixodes scapularis (Black-legged tick).